We begin with the raw amino-acid sequence, 154 residues long: Spermatogenesis-associated protein 19, mitochondrial (154 aa).

A mitochondrion-targeting transit peptide spans 1–24; that stretch reads MIITTWIMYILARKSIGLPFPPRV. A phosphoserine mark is found at S26 and S116.

Expressed in the testis.

It localises to the mitochondrion outer membrane. It is found in the mitochondrion. Its subcellular location is the cell projection. The protein localises to the cilium. The protein resides in the flagellum. Essential for sperm motility and male fertility. Plays an important role in sperm motility by regulating the organization and function of the mitochondria and is also required for correct sperm midpiece assembly. The protein is Spermatogenesis-associated protein 19, mitochondrial (Spata19) of Rattus norvegicus (Rat).